We begin with the raw amino-acid sequence, 226 residues long: Large ribosomal subunit protein uL3 (226 aa).

The tract at residues 135–158 (MSSQRASHGNSRSHNVPGSIGMAQ) is disordered. The span at 137–150 (SQRASHGNSRSHNV) shows a compositional bias: polar residues. Glutamine 158 is subject to N5-methylglutamine.

This sequence belongs to the universal ribosomal protein uL3 family. In terms of assembly, part of the 50S ribosomal subunit. Forms a cluster with proteins L14 and L19. Methylated by PrmB.

One of the primary rRNA binding proteins, it binds directly near the 3'-end of the 23S rRNA, where it nucleates assembly of the 50S subunit. In Polaromonas naphthalenivorans (strain CJ2), this protein is Large ribosomal subunit protein uL3.